Here is a 322-residue protein sequence, read N- to C-terminus: Arginase (322 aa).

Mn(2+) contacts are provided by histidine 113, aspartate 141, histidine 143, and aspartate 145. Substrate contacts are provided by residues 143–147 (HADIN), 154–156 (SGN), and aspartate 200. Mn(2+) is bound by residues aspartate 247 and aspartate 249. Substrate contacts are provided by threonine 261 and glutamate 292.

This sequence belongs to the arginase family. In terms of assembly, homotrimer. It depends on Mn(2+) as a cofactor.

The catalysed reaction is L-arginine + H2O = urea + L-ornithine. It functions in the pathway nitrogen metabolism; urea cycle; L-ornithine and urea from L-arginine: step 1/1. The protein is Arginase (ARG) of Coccidioides immitis (strain RS) (Valley fever fungus).